Here is a 432-residue protein sequence, read N- to C-terminus: Argininosuccinate lyase (432 aa).

The protein belongs to the lyase 1 family. Argininosuccinate lyase subfamily.

The protein resides in the cytoplasm. The enzyme catalyses 2-(N(omega)-L-arginino)succinate = fumarate + L-arginine. It participates in amino-acid biosynthesis; L-arginine biosynthesis; L-arginine from L-ornithine and carbamoyl phosphate: step 3/3. The polypeptide is Argininosuccinate lyase (Xanthomonas euvesicatoria pv. vesicatoria (strain 85-10) (Xanthomonas campestris pv. vesicatoria)).